A 982-amino-acid polypeptide reads, in one-letter code: Glutamate [NMDA] receptor subunit 1 (982 aa).

The N-terminal stretch at 1–22 (MRVAFIYRWLLCGAAIVNVLVA) is a signal peptide. The Extracellular segment spans residues 23–568 (QRHTASDNPS…TLVSFLQPFS (546 aa)). 7 N-linked (GlcNAc...) asparagine glycosylation sites follow: asparagine 253, asparagine 309, asparagine 340, asparagine 392, asparagine 449, asparagine 476, and asparagine 496. Glycine-binding positions include 525-527 (PLT) and arginine 532. Residues 569–589 (NTLWILVMVSVHVVALVLYLL) form a helical membrane-spanning segment. Over 590–646 (DRFSPFGRFKLSHSDSNEEKALNLSSAVWFAWGVLLNSGIGEGTPRSFSARVLGMVW) the chain is Cytoplasmic. Residues 647-667 (AGFAMIIVASYTANLAAFLVL) traverse the membrane as a helical segment. Residues 668–826 (ERPKTKLSGI…KTPNTLGLKN (159 aa)) are Extracellular-facing. Asparagine 688 is a glycosylation site (N-linked (GlcNAc...) asparagine). Glycine is bound by residues serine 698 and aspartate 742. The chain crosses the membrane as a helical span at residues 827–847 (MAGVFILVGVGIAGGVGLIII). The Cytoplasmic segment spans residues 848–982 (EVIYKKHQVK…YTSDVSHLVV (135 aa)). Positions 948 to 982 (LTASQLGLGKTRPQQNPLPPRYSPGYTSDVSHLVV) are disordered. A compositionally biased stretch (polar residues) spans 972–982 (GYTSDVSHLVV).

It belongs to the glutamate-gated ion channel (TC 1.A.10.1) family. As to quaternary structure, forms a heteromeric NMDA channel with Nmdar2.

The protein resides in the cell membrane. It localises to the postsynaptic cell membrane. Its subcellular location is the postsynaptic density. NMDA receptor subtype of glutamate-gated ion channels with high calcium permeability and voltage-dependent sensitivity to magnesium. Mediated by glycine. This protein plays a key role in synaptic plasticity, synaptogenesis, excitotoxicity, memory acquisition and learning. It mediates neuronal functions in glutamate neurotransmission. Is involved in the cell surface targeting of NMDA receptors. Plays a role in associative learning and in long-term memory consolidation. The polypeptide is Glutamate [NMDA] receptor subunit 1 (Drosophila grimshawi (Hawaiian fruit fly)).